The sequence spans 359 residues: Nicotinate-nucleotide--dimethylbenzimidazole phosphoribosyltransferase (359 aa).

Residue Glu318 is the Proton acceptor of the active site.

It belongs to the CobT family. In terms of assembly, homodimer.

The enzyme catalyses 5,6-dimethylbenzimidazole + nicotinate beta-D-ribonucleotide = alpha-ribazole 5'-phosphate + nicotinate + H(+). It participates in nucleoside biosynthesis; alpha-ribazole biosynthesis; alpha-ribazole from 5,6-dimethylbenzimidazole: step 1/2. In terms of biological role, catalyzes the synthesis of alpha-ribazole-5'-phosphate from nicotinate mononucleotide (NAMN) and 5,6-dimethylbenzimidazole (DMB). In Escherichia coli O9:H4 (strain HS), this protein is Nicotinate-nucleotide--dimethylbenzimidazole phosphoribosyltransferase.